Here is a 209-residue protein sequence, read N- to C-terminus: Stringent starvation protein A homolog (209 aa).

In terms of domain architecture, GST N-terminal spans 5–83 (SIMTLYSGPL…YLDERFPHPP (79 aa)). The region spanning 88–203 (YPVARSRCRL…ASLSESESEL (116 aa)) is the GST C-terminal domain.

It belongs to the GST superfamily. HSP26 family.

Its function is as follows. Forms an equimolar complex with the RNA polymerase holoenzyme (RNAP) but not with the core enzyme. This is Stringent starvation protein A homolog (sspA) from Coxiella burnetii (strain RSA 493 / Nine Mile phase I).